A 296-amino-acid polypeptide reads, in one-letter code: Cytoplasmic envelopment protein 1 (296 aa).

This sequence belongs to the herpesviridae cytoplasmic envelopment protein 1 family. Interacts with UL51; this interaction allows incorporation of UL7 within the virion.

It is found in the virion. The protein localises to the virion tegument. It localises to the host cytoplasm. Its subcellular location is the host Golgi apparatus. Plays a critical role in cytoplasmic virus egress. Participates in the final step of tegumentation and envelope acquisition within the host cytoplasm. The sequence is that of Cytoplasmic envelopment protein 1 (UL7) from Human herpesvirus 1 (strain 17) (HHV-1).